Consider the following 306-residue polypeptide: Light-independent protochlorophyllide reductase iron-sulfur ATP-binding protein (306 aa).

Positions 1–31 are disordered; the sequence is MREAAGLEARGLKSPPILKGQDGEGSLQVHQ. ATP is bound by residues 50 to 55 and Lys79; that span reads GIGKST. Ser54 serves as a coordination point for Mg(2+). [4Fe-4S] cluster is bound by residues Cys135 and Cys169. 220–221 serves as a coordination point for ATP; sequence NR.

Belongs to the NifH/BchL/ChlL family. As to quaternary structure, homodimer. Protochlorophyllide reductase is composed of three subunits; BchL, BchN and BchB. The cofactor is [4Fe-4S] cluster.

It catalyses the reaction chlorophyllide a + oxidized 2[4Fe-4S]-[ferredoxin] + 2 ADP + 2 phosphate = protochlorophyllide a + reduced 2[4Fe-4S]-[ferredoxin] + 2 ATP + 2 H2O. The protein operates within porphyrin-containing compound metabolism; bacteriochlorophyll biosynthesis (light-independent). Its function is as follows. Component of the dark-operative protochlorophyllide reductase (DPOR) that uses Mg-ATP and reduced ferredoxin to reduce ring D of protochlorophyllide (Pchlide) to form chlorophyllide a (Chlide). This reaction is light-independent. The L component serves as a unique electron donor to the NB-component of the complex, and binds Mg-ATP. The polypeptide is Light-independent protochlorophyllide reductase iron-sulfur ATP-binding protein (Jannaschia sp. (strain CCS1)).